Reading from the N-terminus, the 542-residue chain is Chaperonin GroEL 3 (542 aa).

Residues 30 to 33, Lys51, 87 to 91, Gly415, and Asp496 each bind ATP; these read TLGP and DGTTT.

This sequence belongs to the chaperonin (HSP60) family. In terms of assembly, forms a cylinder of 14 subunits composed of two heptameric rings stacked back-to-back. Interacts with the co-chaperonin GroES.

It is found in the cytoplasm. The catalysed reaction is ATP + H2O + a folded polypeptide = ADP + phosphate + an unfolded polypeptide.. In terms of biological role, together with its co-chaperonin GroES, plays an essential role in assisting protein folding. The GroEL-GroES system forms a nano-cage that allows encapsulation of the non-native substrate proteins and provides a physical environment optimized to promote and accelerate protein folding. The polypeptide is Chaperonin GroEL 3 (Sinorhizobium medicae (strain WSM419) (Ensifer medicae)).